A 213-amino-acid chain; its full sequence is StAR-related lipid transfer protein 5 (213 aa).

Residues 1–213 (MDPALAAQMS…LQKAVKQFHE (213 aa)) enclose the START domain.

Its function is as follows. May be involved in the intracellular transport of sterols or other lipids. May bind cholesterol or other sterols. This chain is StAR-related lipid transfer protein 5 (STARD5), found in Homo sapiens (Human).